The sequence spans 134 residues: UPF0412 protein YaaI (134 aa).

The first 23 residues, 1–23, serve as a signal peptide directing secretion; it reads MKSVFTLSASLAISLLLCCTAQA.

The protein belongs to the UPF0412 family.

The sequence is that of UPF0412 protein YaaI from Escherichia coli (strain SMS-3-5 / SECEC).